The sequence spans 62 residues: Sec-independent protein translocase protein TatA (62 aa).

The chain crosses the membrane as a helical span at residues 1–21 (MFGIGIPELLVIFVLILLVFG).

This sequence belongs to the TatA/E family. As to quaternary structure, the Tat system comprises two distinct complexes: a TatABC complex, containing multiple copies of TatA, TatB and TatC subunits, and a separate TatA complex, containing only TatA subunits. Substrates initially bind to the TatABC complex, which probably triggers association of the separate TatA complex to form the active translocon.

Its subcellular location is the cell inner membrane. In terms of biological role, part of the twin-arginine translocation (Tat) system that transports large folded proteins containing a characteristic twin-arginine motif in their signal peptide across membranes. TatA could form the protein-conducting channel of the Tat system. The chain is Sec-independent protein translocase protein TatA from Oleidesulfovibrio alaskensis (strain ATCC BAA-1058 / DSM 17464 / G20) (Desulfovibrio alaskensis).